The sequence spans 293 residues: Elongation factor Ts (293 aa).

Residues 80 to 83 (TDFV) are involved in Mg(2+) ion dislocation from EF-Tu.

It belongs to the EF-Ts family.

It localises to the cytoplasm. Associates with the EF-Tu.GDP complex and induces the exchange of GDP to GTP. It remains bound to the aminoacyl-tRNA.EF-Tu.GTP complex up to the GTP hydrolysis stage on the ribosome. The protein is Elongation factor Ts of Lacticaseibacillus casei (strain BL23) (Lactobacillus casei).